We begin with the raw amino-acid sequence, 199 residues long: MPVVECDIQTARAALADAGASFSDGNSEHELWHADLGDAHAVAYADKLVVQGGSPTDITAVVQPDRGGRVHAYFDGASRGNPGPAAVGWVLVSGDGGIVAEGGDTIGRATNNQAEYDALIAALEAAADFGFDDIELRGDSQLVEKQLTGAWDTNDPDLRRKRVRARELLTGFDDWSITHVPRATNERADALANEALDDA.

The interval 1–68 (MPVVECDIQT…TAVVQPDRGG (68 aa)) is not required for RNase H activity. The RNase H type-1 domain maps to 66 to 197 (RGGRVHAYFD…ADALANEALD (132 aa)). The interval 69–199 (RVHAYFDGAS…ALANEALDDA (131 aa)) is as active as intact RNase H. Mg(2+) is bound by residues Asp-75, Glu-115, Asp-139, and Asp-189. Asp-75, Glu-115, Asp-139, and Asp-189 together coordinate Mn(2+).

Belongs to the RNase H family. It depends on Mn(2+) as a cofactor. The cofactor is Mg(2+). Co(2+) is required as a cofactor. Ni(2+) serves as cofactor.

It localises to the cytoplasm. It carries out the reaction Endonucleolytic cleavage to 5'-phosphomonoester.. Its function is as follows. Nuclease that specifically degrades the RNA of RNA-DNA hybrids; seems to act exonucleolytically on RNA/DNA hybrids. Endonucleolytically removes RNA primers from the Okazaki fragments of lagging strand synthesis on its own. Complements the temperature-sensitive phenotype of an E.coli double rnhA/rnhB (RNase H) disruption mutant. The sequence is that of Ribonuclease HI (rnhA) from Halobacterium salinarum (strain ATCC 700922 / JCM 11081 / NRC-1) (Halobacterium halobium).